The following is a 426-amino-acid chain: Selenate reductase subunit C (426 aa).

The next 10 helical transmembrane spans lie at 5-25 (LYFT…YIRL), 40-60 (WGLW…SFLL), 78-98 (LALF…LIDL), 119-139 (WEIQ…WFLM), 187-207 (ILGI…GSLF), 223-243 (IIFL…LYSF), 261-281 (LLTL…LIGL), 302-322 (FIFW…LITI), 330-350 (MGLA…ILVI), and 385-405 (VGLI…VPVF).

The protein belongs to the NrfD family. The complex is composed of three subunits: SrdA, SrdB and SrdC.

The protein localises to the cell membrane. It catalyses the reaction selenite + a quinone + H2O = selenate + a quinol. Component of the respiratory selenate reductase complex, which catalyzes the reduction of selenate to selenite. This subunit probably receives electrons directly from the membrane quinone pool and transfers the electrons to the iron-sulfur clusters of SrdB. May be the membrane anchor protein subunit of the complex. This Mesobacillus selenatarsenatis (strain DSM 18680 / JCM 14380 / FERM P-15431 / SF-1) protein is Selenate reductase subunit C.